We begin with the raw amino-acid sequence, 71 residues long: Small ribosomal subunit protein bS21 (71 aa).

The interval 38–71 (YEKPTTERKRARASAIKRHAKKLARENARRTRLY) is disordered. A compositionally biased stretch (basic residues) spans 46 to 59 (KRARASAIKRHAKK). A compositionally biased stretch (basic and acidic residues) spans 60–71 (LARENARRTRLY).

It belongs to the bacterial ribosomal protein bS21 family.

This is Small ribosomal subunit protein bS21 from Hamiltonella defensa subsp. Acyrthosiphon pisum (strain 5AT).